Consider the following 158-residue polypeptide: Cyclic pyranopterin monophosphate synthase (158 aa).

Substrate-binding positions include 75–77 (LCH) and 111–112 (ME). D126 is a catalytic residue.

This sequence belongs to the MoaC family. Homohexamer; trimer of dimers.

The catalysed reaction is (8S)-3',8-cyclo-7,8-dihydroguanosine 5'-triphosphate = cyclic pyranopterin phosphate + diphosphate. The protein operates within cofactor biosynthesis; molybdopterin biosynthesis. Catalyzes the conversion of (8S)-3',8-cyclo-7,8-dihydroguanosine 5'-triphosphate to cyclic pyranopterin monophosphate (cPMP). The protein is Cyclic pyranopterin monophosphate synthase of Caulobacter vibrioides (strain ATCC 19089 / CIP 103742 / CB 15) (Caulobacter crescentus).